The chain runs to 1003 residues: Calcium-transporting ATPase sarcoplasmic/endoplasmic reticulum type (1003 aa).

Residues 1-59 (MEDAHAKKWEEVVDYFGVDPERGLALEQVKKNQEKYGPNELPAEEGKSLLTLILEQFDD) lie on the Cytoplasmic side of the membrane. Residues 60–78 (LLVKILLLAAIISLVLALF) traverse the membrane as a helical segment. Residues 79–89 (EEHDDEAEQLT) lie on the Extracellular side of the membrane. Residues 90–110 (AYVEPFVILLILIANAVVGVW) form a helical membrane-spanning segment. Residues 111–262 (QEKNAESAIE…QQKLDEFGEQ (152 aa)) are Cytoplasmic-facing. The helical transmembrane segment at 263–282 (LSKVISVICVAVWAINIGHF) threads the bilayer. Residues 283-300 (NDPAHGGSWIKGAIYYFK) are Extracellular-facing. A helical membrane pass occupies residues 301–318 (IAVALAVAAIPEGLPAVI). The Cytoplasmic segment spans residues 319–775 (TTCLALGTRR…RYLISSNIGE (457 aa)). Asp-354 serves as the catalytic 4-aspartylphosphate intermediate. Residue Lys-519 participates in ATP binding. A helical transmembrane segment spans residues 776–799 (VVSIFLTAALGLPEALIPVQLLWV). The Extracellular segment spans residues 800 to 840 (NLVTDGLPATALGFNPPDLDIMNKPPRRADEGLITGWLFFR). Residues 841-863 (YMAIGTYVGAATVGAAAHWFMMS) form a helical membrane-spanning segment. At 864-898 (PTGPGLNFYQLSHHLQCTPENEYFEGIDCEIFSDP) the chain is on the cytoplasmic side. The chain crosses the membrane as a helical span at residues 899 to 917 (HPMTMALSVLVTIEMLNAI). Over 918–934 (NSLSENQSLLVMPPWSN) the chain is Extracellular. Residues 935-954 (IWLISAICLSMTLHFVILYV) form a helical membrane-spanning segment. Residues 955–1003 (EILSTVFQICPLTLTEWIVVLKISFPVLLLDEVLKFVARKYTDEFSFIK) lie on the Cytoplasmic side of the membrane.

This sequence belongs to the cation transport ATPase (P-type) (TC 3.A.3) family.

The protein localises to the sarcoplasmic reticulum membrane. It catalyses the reaction Ca(2+)(in) + ATP + H2O = Ca(2+)(out) + ADP + phosphate + H(+). Its function is as follows. This magnesium-dependent enzyme catalyzes the hydrolysis of ATP coupled with the transport of the calcium. The chain is Calcium-transporting ATPase sarcoplasmic/endoplasmic reticulum type from Artemia franciscana (Brine shrimp).